The following is a 228-amino-acid chain: Octanoyltransferase (228 aa).

Positions 32–214 constitute a BPL/LPL catalytic domain; that stretch reads DVVPDTVLLV…HLRRLFERDW (183 aa). Substrate-binding positions include 77-84, 144-146, and 157-159; these read RGGDVTYH, SVG, and GIA. Catalysis depends on cysteine 175, which acts as the Acyl-thioester intermediate.

The protein belongs to the LipB family.

The protein localises to the cytoplasm. It catalyses the reaction octanoyl-[ACP] + L-lysyl-[protein] = N(6)-octanoyl-L-lysyl-[protein] + holo-[ACP] + H(+). The protein operates within protein modification; protein lipoylation via endogenous pathway; protein N(6)-(lipoyl)lysine from octanoyl-[acyl-carrier-protein]: step 1/2. Functionally, catalyzes the transfer of endogenously produced octanoic acid from octanoyl-acyl-carrier-protein onto the lipoyl domains of lipoate-dependent enzymes. Lipoyl-ACP can also act as a substrate although octanoyl-ACP is likely to be the physiological substrate. This is Octanoyltransferase from Syntrophobacter fumaroxidans (strain DSM 10017 / MPOB).